Reading from the N-terminus, the 360-residue chain is tRNA/tmRNA (uracil-C(5))-methyltransferase (360 aa).

S-adenosyl-L-methionine-binding residues include Gln185, Tyr213, Asn218, Glu234, and Asp294. The Nucleophile role is filled by Cys319. Residue Glu353 is the Proton acceptor of the active site.

It belongs to the class I-like SAM-binding methyltransferase superfamily. RNA M5U methyltransferase family. TrmA subfamily.

It catalyses the reaction uridine(54) in tRNA + S-adenosyl-L-methionine = 5-methyluridine(54) in tRNA + S-adenosyl-L-homocysteine + H(+). It carries out the reaction uridine(341) in tmRNA + S-adenosyl-L-methionine = 5-methyluridine(341) in tmRNA + S-adenosyl-L-homocysteine + H(+). Functionally, dual-specificity methyltransferase that catalyzes the formation of 5-methyluridine at position 54 (m5U54) in all tRNAs, and that of position 341 (m5U341) in tmRNA (transfer-mRNA). The protein is tRNA/tmRNA (uracil-C(5))-methyltransferase of Nitratiruptor sp. (strain SB155-2).